A 271-amino-acid polypeptide reads, in one-letter code: Phosphatidylglycerol--prolipoprotein diacylglyceryl transferase (271 aa).

Helical transmembrane passes span 10–30, 56–76, 92–112, 120–140, 174–194, 202–222, and 237–257; these read VALA…LVGI, LVFW…VLFY, WKGG…ALWF, FFQL…AGRI, PSQL…LWLF, MAVS…VEFV, and LTMG…LIWL. Position 139 (arginine 139) interacts with a 1,2-diacyl-sn-glycero-3-phospho-(1'-sn-glycerol).

Belongs to the Lgt family.

The protein resides in the cell inner membrane. The enzyme catalyses L-cysteinyl-[prolipoprotein] + a 1,2-diacyl-sn-glycero-3-phospho-(1'-sn-glycerol) = an S-1,2-diacyl-sn-glyceryl-L-cysteinyl-[prolipoprotein] + sn-glycerol 1-phosphate + H(+). It participates in protein modification; lipoprotein biosynthesis (diacylglyceryl transfer). Functionally, catalyzes the transfer of the diacylglyceryl group from phosphatidylglycerol to the sulfhydryl group of the N-terminal cysteine of a prolipoprotein, the first step in the formation of mature lipoproteins. In Pseudomonas fluorescens (strain Pf0-1), this protein is Phosphatidylglycerol--prolipoprotein diacylglyceryl transferase.